Here is a 670-residue protein sequence, read N- to C-terminus: MAHKKQAWAKRVKKERFKKKYLTRMQATRLLQMESIQFRRLCILKGVYPRALTRSKQKQSGNEKQYYLAREIKWLVRDHIAEKMMTYRAWEKKVKRAEAMGRADDLKALQSSRVKPRHSLVATIKERYPYFIDAIRDVDDAMSMIHMYAFLSPEIKSESTIEIHHSLTSGLSEKAKEMCHRWNRYIARAHVLTKGFISIKGYYYEAIIKGERVRWLCPHEYAHRFPPGIQQYVMLSFLEFYLEMMKFVLFKLESDLARDEADRLAIEDEEGLTRANAEDFASGAALAVLDVGANQAQAKVKEAESKRSLMEEELLKVRELFRGLTFYISREVPAKHFALIINACGGRVATDYVASNITHVVVDRPALPPGWQQHDQMEYVQPQYIFDCLNARQMLPVTGYRIGEDLPPHVSPFSVSITNSAEDNAAVEQVKKDHPRIVGYVPARVHEIRKLINPSYSPVDPEGKVAQLEDEYSDEEMHVAVPEMDMEDDVSLSGDELAEARKKPGWQEEEVTEEVQRPKLSAFKVKKQREMNLMNAPTNEVVARRRQALRKAQENLRQSETPEARLQRKMSEVKRQEAVTRKMQLQVARKKAARFYKMVSGVVQGTAKKAATLEAKAKHIAEGKLHKTEDGKGLVNARLAARRQRAEAKGKKLKEKKADNPYKKLPKWVQ.

Positions 292–321 (GANQAQAKVKEAESKRSLMEEELLKVRELF) form a coiled coil. A BRCT domain is found at 316–402 (KVRELFRGLT…QMLPVTGYRI (87 aa)). The interval 643–670 (RQRAEAKGKKLKEKKADNPYKKLPKWVQ) is disordered. The span at 644-662 (QRAEAKGKKLKEKKADNPY) shows a compositional bias: basic and acidic residues.

Belongs to the pescadillo family.

The protein resides in the nucleus. It is found in the nucleolus. The protein localises to the nucleoplasm. In terms of biological role, required for maturation of ribosomal RNAs and formation of the large ribosomal subunit. This Leishmania braziliensis protein is Pescadillo homolog.